Consider the following 302-residue polypeptide: N-acetylmuramic acid 6-phosphate etherase (302 aa).

The region spanning 58–221 (IGESFLNGGR…STGAMVKTGK (164 aa)) is the SIS domain. Glu-86 (proton donor) is an active-site residue. Glu-117 is an active-site residue.

It belongs to the GCKR-like family. MurNAc-6-P etherase subfamily. As to quaternary structure, homodimer.

It catalyses the reaction N-acetyl-D-muramate 6-phosphate + H2O = N-acetyl-D-glucosamine 6-phosphate + (R)-lactate. Its pathway is amino-sugar metabolism; N-acetylmuramate degradation. Its function is as follows. Specifically catalyzes the cleavage of the D-lactyl ether substituent of MurNAc 6-phosphate, producing GlcNAc 6-phosphate and D-lactate. This chain is N-acetylmuramic acid 6-phosphate etherase, found in Clostridium botulinum (strain Okra / Type B1).